The chain runs to 327 residues: Phenylalanine--tRNA ligase alpha subunit (327 aa).

Residue E252 coordinates Mg(2+).

Belongs to the class-II aminoacyl-tRNA synthetase family. Phe-tRNA synthetase alpha subunit type 1 subfamily. In terms of assembly, tetramer of two alpha and two beta subunits. Mg(2+) is required as a cofactor.

Its subcellular location is the cytoplasm. The enzyme catalyses tRNA(Phe) + L-phenylalanine + ATP = L-phenylalanyl-tRNA(Phe) + AMP + diphosphate + H(+). In Shewanella sediminis (strain HAW-EB3), this protein is Phenylalanine--tRNA ligase alpha subunit.